The chain runs to 531 residues: UDP-glucuronosyltransferase 1A6 (531 aa).

Residues 1–26 (MACLLSAAQRASAGVLFVALWGTVLG) form the signal peptide. Residue asparagine 294 is glycosylated (N-linked (GlcNAc...) asparagine). Residues 489–505 (VIGFLLAIVLTVAFVTF) traverse the membrane as a helical segment.

The protein belongs to the UDP-glycosyltransferase family.

Its subcellular location is the microsome. The protein localises to the endoplasmic reticulum membrane. It catalyses the reaction glucuronate acceptor + UDP-alpha-D-glucuronate = acceptor beta-D-glucuronoside + UDP + H(+). The catalysed reaction is (5Z,8Z,11Z,14Z)-eicosatetraenoate + UDP-alpha-D-glucuronate = O-[(5Z),(8Z),(11Z),(14Z)-eicosatetraenoyl]-beta-D-glucuronate + UDP. It carries out the reaction 15-hydroxy-(5Z,8Z,11Z,13E)-eicosatetraenoate + UDP-alpha-D-glucuronate = 15-O-(beta-D-glucuronosyl)-(5Z,8Z,11Z,14Z)-eicosatetraenoate + UDP + H(+). The enzyme catalyses (E)-ferulate + UDP-alpha-D-glucuronate = (E)-4-O-(beta-D-glucuronosyl)-ferulate + UDP + H(+). It catalyses the reaction (E)-ferulate + UDP-alpha-D-glucuronate = (E)-ferulic acid beta-D-glucuronate ester + UDP. Its function is as follows. UDP-glucuronosyltransferase (UGT) that catalyzes phase II biotransformation reactions in which lipophilic substrates are conjugated with glucuronic acid to facilitate their inactivation and excretion from the body. Essential for the elimination and detoxification of drugs, xenobiotics and endogenous compounds. Involved in the glucuronidation of arachidonic acid (AA) and AA-derived eicosanoids including 15-HETE and 20-HETE. Conjugates small planar phenolic molecules such as 4-nitrophenol, 1-naphthol, and 4-methylumbelliferone. The bulky phenol 4-hydroxybiphenyl, androgens and estrogens are not substrates. 2-hydroxybiphenyl is an excellent substrate. Involved in the glucuronidation of the phytochemical ferulic acid at the phenolic or the carboxylic acid group. The chain is UDP-glucuronosyltransferase 1A6 (UGT1) from Oryctolagus cuniculus (Rabbit).